A 150-amino-acid chain; its full sequence is Urease accessory protein UreE (150 aa).

This sequence belongs to the UreE family.

The protein resides in the cytoplasm. In terms of biological role, involved in urease metallocenter assembly. Binds nickel. Probably functions as a nickel donor during metallocenter assembly. This is Urease accessory protein UreE from Staphylococcus aureus (strain MRSA252).